Consider the following 195-residue polypeptide: 3-isopropylmalate dehydratase small subunit (195 aa).

Belongs to the LeuD family. LeuD type 1 subfamily. In terms of assembly, heterodimer of LeuC and LeuD.

It carries out the reaction (2R,3S)-3-isopropylmalate = (2S)-2-isopropylmalate. It participates in amino-acid biosynthesis; L-leucine biosynthesis; L-leucine from 3-methyl-2-oxobutanoate: step 2/4. Catalyzes the isomerization between 2-isopropylmalate and 3-isopropylmalate, via the formation of 2-isopropylmaleate. This chain is 3-isopropylmalate dehydratase small subunit, found in Corynebacterium kroppenstedtii (strain DSM 44385 / JCM 11950 / CIP 105744 / CCUG 35717).